The following is a 46-amino-acid chain: Endochitinase 4 (46 aa).

It belongs to the glycosyl hydrolase 19 family. Chitinase class I subfamily.

The catalysed reaction is Random endo-hydrolysis of N-acetyl-beta-D-glucosaminide (1-&gt;4)-beta-linkages in chitin and chitodextrins.. In terms of biological role, defense against chitin-containing fungal and bacterial pathogens. This Arachis hypogaea (Peanut) protein is Endochitinase 4.